Here is a 257-residue protein sequence, read N- to C-terminus: Imidazole glycerol phosphate synthase subunit HisF (257 aa).

Residues Asp11 and Asp130 contribute to the active site.

Belongs to the HisA/HisF family. As to quaternary structure, heterodimer of HisH and HisF.

The protein localises to the cytoplasm. The enzyme catalyses 5-[(5-phospho-1-deoxy-D-ribulos-1-ylimino)methylamino]-1-(5-phospho-beta-D-ribosyl)imidazole-4-carboxamide + L-glutamine = D-erythro-1-(imidazol-4-yl)glycerol 3-phosphate + 5-amino-1-(5-phospho-beta-D-ribosyl)imidazole-4-carboxamide + L-glutamate + H(+). Its pathway is amino-acid biosynthesis; L-histidine biosynthesis; L-histidine from 5-phospho-alpha-D-ribose 1-diphosphate: step 5/9. In terms of biological role, IGPS catalyzes the conversion of PRFAR and glutamine to IGP, AICAR and glutamate. The HisF subunit catalyzes the cyclization activity that produces IGP and AICAR from PRFAR using the ammonia provided by the HisH subunit. This is Imidazole glycerol phosphate synthase subunit HisF from Psychromonas ingrahamii (strain DSM 17664 / CCUG 51855 / 37).